Here is a 64-residue protein sequence, read N- to C-terminus: Large ribosomal subunit protein bL35 (64 aa).

The disordered stretch occupies residues 1–22; the sequence is MPKAKTHSGASKRFRRTGTGKI.

Belongs to the bacterial ribosomal protein bL35 family.

In Mycobacterium tuberculosis (strain ATCC 25177 / H37Ra), this protein is Large ribosomal subunit protein bL35.